The primary structure comprises 82 residues: Small ribosomal subunit protein bS16 (82 aa).

The protein belongs to the bacterial ribosomal protein bS16 family.

The sequence is that of Small ribosomal subunit protein bS16 from Shewanella sp. (strain ANA-3).